The following is a 182-amino-acid chain: Mid1-interacting protein 1 (182 aa).

N-acetylmethionine is present on Met-1. The interval 55 to 75 is disordered; that stretch reads VGGSGGCLEERTTPAPSPGSA. Ser-71, Ser-74, and Ser-78 each carry phosphoserine.

This sequence belongs to the SPOT14 family. Homodimer in the absence of THRSP. Heterodimer with THRSP. The homodimer interacts with ACACA and ACACB. Promotes polymerization of Acetyl-CoA carboxylase to form complexes that contain MID1IP1 and ACACA and/or ACACB. Interaction with THRSP interferes with ACACA binding. During embryonic development, expressed mainly in the neuroepithelial midline, urogenital apparatus and digits. Detected in adult white fat, liver, heart, brain and kidney. Expressed at very low levels in lactating mammary gland.

It is found in the nucleus. The protein resides in the cytoplasm. Its subcellular location is the cytoskeleton. Plays a role in the regulation of lipogenesis in liver. Up-regulates ACACA enzyme activity. Required for efficient lipid biosynthesis, including triacylglycerol, diacylglycerol and phospholipid. Involved in stabilization of microtubules. This chain is Mid1-interacting protein 1 (Mid1ip1), found in Mus musculus (Mouse).